A 261-amino-acid polypeptide reads, in one-letter code: Acidic leucine-rich nuclear phosphoprotein 32 family member B (261 aa).

4 LRR repeats span residues 16-40 (PAAV…LTAE), 43-64 (NLEF…PKLP), 65-87 (KLKK…AEKL), and 89-110 (NLTH…EPLK). Residue Lys86 is modified to N6-acetyllysine. The LRRCT domain occupies 123 to 161 (CEVTNLNDYRESVFKLLPQLTYLDGYDREDREAPDSDAE). A disordered region spans residues 149–261 (DREDREAPDS…RETDDEGEDD (113 aa)). Over residues 157–243 (DSDAEVDGVD…DEDEDEEEEE (87 aa)) the composition is skewed to acidic residues. Ser158 carries the phosphoserine modification. Residues 244–254 (SGKGEKRKRET) are compositionally biased toward basic and acidic residues. The short motif at 249 to 252 (KRKR) is the Nuclear localization signal element. Phosphothreonine is present on Thr254.

This sequence belongs to the ANP32 family. Interacts with histones H3 and H4. Interacts with KLF5; this interaction induces promoter region-specific histone incorporation and inhibition of histone acetylation by ANP32B. Some Glu residues are glycylated by TTLL8; a modification that generates a side chains of glycine on the gamma-carboxyl groups of specific glutamate residues. Post-translationally, directly cleaved by caspase-3/CASP3.

The protein localises to the nucleus. Its function is as follows. Multifunctional protein that is involved in the regulation of many processes including cell proliferation, apoptosis, cell cycle progression or transcription. Regulates the proliferation of neuronal stem cells, differentiation of leukemic cells and progression from G1 to S phase of the cell cycle. As negative regulator of caspase-3-dependent apoptosis, may act as an antagonist of ANP32A in regulating tissue homeostasis. Exhibits histone chaperone properties, able to recruit histones to certain promoters, thus regulating the transcription of specific genes. Also plays an essential role in the nucleocytoplasmic transport of specific mRNAs via the uncommon nuclear mRNA export receptor XPO1/CRM1. Participates in the regulation of adequate adaptive immune responses by acting on mRNA expression and cell proliferation. The protein is Acidic leucine-rich nuclear phosphoprotein 32 family member B (ANP32B) of Bos taurus (Bovine).